Reading from the N-terminus, the 146-residue chain is Small nuclear ribonucleoprotein Sm D1 (146 aa).

The 100-residue stretch at Lys-2–Leu-101 folds into the Sm domain. Residues Arg-118–Leu-146 are disordered. Positions Lys-128–Arg-144 match the Nuclear localization signal motif.

Belongs to the snRNP core protein family. As to quaternary structure, component of the Sm core complex, present in spliceosomal snRNP U1, U2, U4/U6 and U5. The core complex contains SMB1, SMD1, SMD2, SMD3, SME1, SMX3 and SMX2 (Sm proteins B, D1, D2, D3, E, F and G, respectively), and is probably a heptameric ring structure. Belongs to the CWC complex (or CEF1-associated complex), a spliceosome sub-complex reminiscent of a late-stage spliceosome composed of the U2, U5 and U6 snRNAs and at least BUD13, BUD31, BRR2, CDC40, CEF1, CLF1, CUS1, CWC2, CWC15, CWC21, CWC22, CWC23, CWC24, CWC25, CWC27, ECM2, HSH155, IST3, ISY1, LEA1, MSL1, NTC20, PRP8, PRP9, PRP11, PRP19, PRP21, PRP22, PRP45, PRP46, SLU7, SMB1, SMD1, SMD2, SMD3, SMX2, SMX3, SNT309, SNU114, SPP2, SYF1, SYF2, RSE1 and YJU2. Component of the U4/U6-U5 tri-snRNP complex composed of the U4, U6 and U5 snRNAs and at least PRP3, PRP4, PRP6, PRP8, PRP18, PRP31, PRP38, SNU13, SNU23, SNU66, SNU114, SPP381, SMB1, SMD1, SMD2, SMD3, SMX2, SMX3, LSM2, LSM3, LSM4, LSM5, LSM6, LSM7, LSM8, BRR2 and DIB1.

Its subcellular location is the nucleus. The protein localises to the cytoplasm. Its function is as follows. lays a role in pre-mRNA splicing as a core component of the spliceosomal U1, U2, U4 and U5 small nuclear ribonucleoproteins (snRNPs), the building blocks of the spliceosome. Also binds telomerase RNA and is required for its accumulation. This Saccharomyces cerevisiae (strain ATCC 204508 / S288c) (Baker's yeast) protein is Small nuclear ribonucleoprotein Sm D1 (SMD1).